The following is a 2339-amino-acid chain: Voltage-dependent N-type calcium channel subunit alpha-1B (2339 aa).

The Cytoplasmic portion of the chain corresponds to 1–90 (MVRFGDELGG…DNVVRKYAKR (90 aa)). Residues 15 to 34 (AGGAERARGGGAGGAGGPGP) show a composition bias toward gly residues. The tract at residues 15 to 37 (AGGAERARGGGAGGAGGPGPGGL) is disordered. Omega-N-methylarginine is present on Arg22. The I repeat unit spans residues 82–359 (NVVRKYAKRI…LVLGVLSGEF (278 aa)). The helical transmembrane segment at 91-114 (ITEWPPFEYMILATIIANCIVLAL) threads the bilayer. The Extracellular segment spans residues 115 to 131 (EQHLPDGDKTPMSERLD). Residues 132-152 (DTEPYFIGIFCFEAGIKILAL) traverse the membrane as a helical segment. The Cytoplasmic segment spans residues 153 to 163 (GFVLHKGSYLR). The chain crosses the membrane as a helical span at residues 164–182 (NGWNVMDFVVVLTGILATA). Residues 183–187 (GTDFD) lie on the Extracellular side of the membrane. The chain crosses the membrane as a helical span at residues 188–211 (LRTLRAVRVLRPLKLVSGIPSLQV). Topologically, residues 212–221 (VLKSIMKAMV) are cytoplasmic. Residues 222–244 (PLLQIGLLLFFAILMFAIIGLEF) traverse the membrane as a helical segment. Residues 245-331 (YMGKFHKACF…NTNDAAGNTW (87 aa)) lie on the Extracellular side of the membrane. The N-linked (GlcNAc...) asparagine glycan is linked to Asn256. The chain crosses the membrane as a helical span at residues 332–356 (NWLYFIPLIIIGSFFMLNLVLGVLS). The Cytoplasmic portion of the chain corresponds to 357-483 (GEFAKERERV…FFIRRMVKAQ (127 aa)). The interval 379–396 (QQIERELNGYLEWIFKAE) is binding to the beta subunit. Residue Ser411 is modified to Phosphoserine. Residue 452-459 (ASLKSGKT) participates in ATP binding. Residues 469–713 (EKMFRFFIRR…VFLAIAVDNL (245 aa)) form an II repeat. The helical transmembrane segment at 484-502 (SFYWTVLCVVALNTLCVAM) threads the bilayer. At 503–512 (VHYNQPQRLT) the chain is on the extracellular side. Residues 513-535 (TALYFAEFVFLGLFLTEMSLKMY) traverse the membrane as a helical segment. Over 536–545 (GLGPRSYFRS) the chain is Cytoplasmic. Ser545 contributes to the a 1,2-diacyl-sn-glycero-3-phospho-(1D-myo-inositol-4,5-bisphosphate) binding site. The chain crosses the membrane as a helical span at residues 546 to 567 (SFNCFDFGVIVGSIFEVVWAAV). Over 568-574 (KPGTSFG) the chain is Extracellular. The chain crosses the membrane as a helical span at residues 575–587 (ISVLRALRLLRIF). A 1,2-diacyl-sn-glycero-3-phospho-(1D-myo-inositol-4,5-bisphosphate)-binding residues include Arg585 and Lys588. At 588 to 605 (KVTKYWNSLRNLVVSLLN) the chain is on the cytoplasmic side. The chain crosses the membrane as a helical span at residues 606-631 (SMKSIISLLFLLFLFIVVFALLGMQL). Topologically, residues 632–683 (FGGQFNFKDETPTTNFDTFPAAILTVFQILTGEDWNAVMYHGIESQGGVSRG) are extracellular. Residues 684–710 (MFSSFYFIVLTLFGNYTLLNVFLAIAV) form a helical membrane-spanning segment. Topologically, residues 711 to 1156 (DNLANAQELT…CCHYIVTMRY (446 aa)) are cytoplasmic. Ser746, Ser749, and Ser784 each carry phosphoserine. Basic and acidic residues-rich tracts occupy residues 809 to 827 (DVKTHLDRPLVVEPGRDAP), 870 to 891 (EQDRAEALRAEGGELGPREERG), 927 to 937 (GSPEEAAEREP), 973 to 984 (CPREAESSEEPA), and 999 to 1026 (TAEKDKEAAEKGGEATEAEKDKEARNHQ). Disordered stretches follow at residues 809–1026 (DVKT…RNHQ) and 1056–1084 (VEEQPEDADNQRNVTRMGSQPPDTSTTVH). The segment covering 1066-1083 (QRNVTRMGSQPPDTSTTV) has biased composition (polar residues). Ser1074 is subject to Phosphoserine. The III repeat unit spans residues 1142–1424 (NLLRRCCHYI…IFVALIIITF (283 aa)). A helical membrane pass occupies residues 1157–1175 (FEMVILVVIALSSIALAAE). Topologically, residues 1176-1183 (DPVRTDSP) are extracellular. Residues 1184–1208 (RNNALKYMDYIFTGVFTFEMVIKMI) traverse the membrane as a helical segment. Over 1209–1222 (DLGLLLHPGAYFRD) the chain is Cytoplasmic. Residues 1223–1243 (LWNILDFIVVSGALVAFAFSG) traverse the membrane as a helical segment. Topologically, residues 1244–1249 (SKGKDI) are extracellular. Residues 1250-1270 (STIKSLRVLRVLRPLKTIKRL) form a helical membrane-spanning segment. At 1271-1288 (PKLKAVFDCVVNSLKNVL) the chain is on the cytoplasmic side. A helical transmembrane segment spans residues 1289 to 1308 (NILIVYMLFMFIFAVIAVQL). Residues 1309–1395 (FKGKFFYCTD…EQGPSPGYRM (87 aa)) lie on the Extracellular side of the membrane. Residues 1396-1421 (ELSIFYVVYFVVFPFFFVNIFVALII) traverse the membrane as a helical segment. The Cytoplasmic portion of the chain corresponds to 1422-1476 (ITFQEQGDKVMSECSLEKNERACIDFAISARPLTRYMPQNKQSFQYKTWTFVVSP). The stretch at 1461–1714 (NKQSFQYKTW…LFVAVIMDNF (254 aa)) is one IV repeat. Residues 1477 to 1495 (PFEYFIMAMIALNTVVLMM) form a helical membrane-spanning segment. The Extracellular portion of the chain corresponds to 1496–1503 (KFYDAPYE). Residues 1504-1528 (YELMLKCLNIVFTSMFSMECVLKII) traverse the membrane as a helical segment. Residues 1529–1538 (AFGVLNYFRD) are Cytoplasmic-facing. Residues 1539–1560 (AWNVFDFVTVLGSITDILVTEI) form a helical membrane-spanning segment. Topologically, residues 1561 to 1566 (ANNFIN) are extracellular. Residue Asn1566 is glycosylated (N-linked (GlcNAc...) asparagine). A helical transmembrane segment spans residues 1567-1585 (LSFLRLFRAARLIKLLRQG). Over 1586–1604 (YTIRILLWTFVQSFKALPY) the chain is Cytoplasmic. Residues 1605-1624 (VCLLIAMLFFIYAIIGMQVF) form a helical membrane-spanning segment. Residues 1625 to 1686 (GNIALDDDTS…SNASECGSDF (62 aa)) lie on the Extracellular side of the membrane. An N-linked (GlcNAc...) asparagine glycan is attached at Asn1678. The chain crosses the membrane as a helical span at residues 1687-1710 (AYFYFVSFIFLCSFLMLNLFVAVI). Residues 1711–2339 (MDNFEYLTRD…CHHPDRDRRC (629 aa)) are Cytoplasmic-facing. The region spanning 1727–1762 (HHLDEFIRVWAEYDPAACGRISYSDMFEMLKHMSPP) is the EF-hand domain. Positions 1740, 1746, and 1751 each coordinate Ca(2+). Residues 1983-2312 (TLSGPDAEPQ…QPPPLRRVPN (330 aa)) form a disordered region. Residues 2050 to 2064 (PHHHHHRCHRRRDRK) show a composition bias toward basic residues. At Ser2067 the chain carries Phosphoserine. Residues 2099-2136 (CRRERERRQERGRSQERRQPSSSSSEKHRFYSCDRFGG) show a composition bias toward basic and acidic residues. 2 stretches are compositionally biased toward polar residues: residues 2144 to 2155 (PSLSSHPTSPTA) and 2165 to 2181 (GSGSVHGSPLLSTSGAS). Residues Ser2224, Ser2233, and Ser2256 each carry the phosphoserine modification. Positions 2286–2302 (SNSGRSSRTSYVSSLTS) are enriched in low complexity.

It belongs to the calcium channel alpha-1 subunit (TC 1.A.1.11) family. CACNA1B subfamily. Multisubunit complex consisting of alpha-1, alpha-2, beta and delta subunits in a 1:1:1:1 ratio. The channel activity is directed by the pore-forming and voltage-sensitive alpha-1 subunit. In many cases, this subunit is sufficient to generate voltage-sensitive calcium channel activity. The auxiliary subunits beta and alpha-2/delta linked by a disulfide bridge regulate the channel activity. Interacts with RIMS1. Interacts with FMR1 (via C-terminus); this interaction induces a decrease in the number of presynaptic functional CACNA1B channels at the cell surface. Post-translationally, phosphorylated in vitro by CaM-kinase II, PKA, PKC and CGPK. Widespread expression throughout the brain. Highest levels in corpus striatum and midbrain.

The protein resides in the membrane. The catalysed reaction is Ca(2+)(in) = Ca(2+)(out). Its activity is regulated as follows. Is specifically blocked by omega-conotoxin GVIA. Is specifically blocked by omega-conotoxin MVIIA (ziconotide). Is insensitive to dihydropyridines (DHP). Functionally, voltage-sensitive calcium channels (VSCC) mediate the entry of calcium ions into excitable cells and are also involved in a variety of calcium-dependent processes, including muscle contraction, hormone or neurotransmitter release, gene expression, cell motility, cell division and cell death. This alpha-1B subunit gives rise to N-type calcium currents. N-type calcium channels belong to the 'high-voltage activated' (HVA) group. They are involved in pain signaling. Calcium channels containing alpha-1B subunit may play a role in directed migration of immature neurons. Mediates Ca(2+) release probability at hippocampal neuronal soma and synaptic terminals. The protein is Voltage-dependent N-type calcium channel subunit alpha-1B (CACNA1B) of Oryctolagus cuniculus (Rabbit).